Consider the following 102-residue polypeptide: Small ribosomal subunit protein uS10 (102 aa).

The protein belongs to the universal ribosomal protein uS10 family. Part of the 30S ribosomal subunit.

In terms of biological role, involved in the binding of tRNA to the ribosomes. The protein is Small ribosomal subunit protein uS10 of Lactobacillus delbrueckii subsp. bulgaricus (strain ATCC 11842 / DSM 20081 / BCRC 10696 / JCM 1002 / NBRC 13953 / NCIMB 11778 / NCTC 12712 / WDCM 00102 / Lb 14).